We begin with the raw amino-acid sequence, 977 residues long: MPAVSKGDGMRGLAVFISDIRNCKSKEAEIKRINKELANIRSKFKGDKALDGYSKKKYVCKLLFIFLLGHDIDFGHMEAVNLLSSNKYTEKQIGYLFISVLVNSNSELIRLINNAIKNDLASRNPTFMCLALHCIANVGSREMGEAFAADIPRILVAGDSMDSVKQSAALCLLRLYKASPDLVPMGEWTARVVHLLNDQHMGVVTAAVSLITCLCKKNPDDFKTCISLAVSRLSRIVSSASTDLQDYTYYFVPAPWLSVKLLRLLQCYPPPEDAAVKGRLVECLETVLNKAQEPPKSKKVQHSNAKNAILFETISLIIHYDSEPNLLVRACNQLGQFLQHRETNLRYLALESMCTLASSEFSHEAVKTHIDTVINALKTERDVSVRQRAADLLYAMCDRSNAKQIVSEMLRYLETADYAIREEIVLKVAILAEKYAVDYSWYVDTILNLIRIAGDYVSEEVWYRVLQIVTNRDDVQGYAAKTVFEALQAPACHENMVKVGGYILGEFGNLIAGDPRSSPPVQFSLLHSKFHLCSVATRALLLSTYIKFINLFPETKATIQGVLRAGSQLRNADVELQQRAVEYLTLSSVASTDVLATVLEEMPPFPERESSILAKLKRKKGPGAASALDDSRRDTSSNDINGGVEPTPSTVSTPSPSADLLGLRAAPPPAAPPAPVGGNLLVDVFSDGPTAQPSLGPTPEEAFLSELEPPAPESPMALLADPAPAADPGPEDIGPPIPEADELLNKFVCKNSGVLFENQLLQIGVKSEFRQNLGRMYLFYGNKTSVQFQNFLPTVVHPGDLQTQLAVQTKRVAAQVDGGAQVQQVLNIECLRDFLTPPLLSVRFRYGGTAQSLTLKLPVTINKFFQPTEMAAQDFFQRWKQLSLPLQEAQKIFKANHPMDAEVTKAKLLGFGSALLDNVDPNPENFVGAGIIQTKALQVGCLLRLEPNAQAQMYRLTLRTSKEPVSRHLCELLAQQF.

Residues 614–702 form a disordered region; sequence AKLKRKKGPG…PSLGPTPEEA (89 aa). A phosphoserine mark is found at Ser626 and Ser652. The segment covering 646–657 has biased composition (low complexity); it reads PTPSTVSTPSPS. Thr653 carries the post-translational modification Phosphothreonine. Position 655 is a phosphoserine (Ser655). The segment covering 666-675 has biased composition (pro residues); that stretch reads APPPAAPPAP.

It belongs to the adaptor complexes large subunit family. As to quaternary structure, adaptor protein complex 2 (AP-2) is a heterotetramer composed of two large adaptins (alpha-type subunit AP2A1 or AP2A2 and beta-type subunit AP2B1), a medium adaptin (mu-type subunit AP2M1) and a small adaptin (sigma-type subunit AP2S1). Interacts with HIP1 and RAB11FIP2. Interacts with SLC12A5. Interacts with clathrin. Interacts with SGIP1. Interacts with RFTN1. Interacts with KIAA1107. Interacts with PICALM. Together with AP2B1 and AP2M1, it interacts with ADAM10; this interaction facilitates ADAM10 endocytosis from the plasma membrane during long-term potentiation in hippocampal neurons. Interacts with ABCB11; this interaction regulates cell membrane expression of ABCB11 through its internalization in a clathrin-dependent manner and its subsequent degradation. Probably interacts with ACE2 (via endocytic sorting signal motif); the interaction is inhibited by ACE2 phosphorylation. As to expression, expressed in the brain (at protein level). Isoform A: Expressed only in neuronal tissue and skeletal muscle. Isoform B: Widely expressed.

The protein localises to the cell membrane. Its subcellular location is the membrane. The protein resides in the coated pit. Component of the adaptor protein complex 2 (AP-2). Adaptor protein complexes function in protein transport via transport vesicles in different membrane traffic pathways. Adaptor protein complexes are vesicle coat components and appear to be involved in cargo selection and vesicle formation. AP-2 is involved in clathrin-dependent endocytosis in which cargo proteins are incorporated into vesicles surrounded by clathrin (clathrin-coated vesicles, CCVs) which are destined for fusion with the early endosome. The clathrin lattice serves as a mechanical scaffold but is itself unable to bind directly to membrane components. Clathrin-associated adaptor protein (AP) complexes which can bind directly to both the clathrin lattice and to the lipid and protein components of membranes are considered to be the major clathrin adaptors contributing the CCV formation. AP-2 also serves as a cargo receptor to selectively sort the membrane proteins involved in receptor-mediated endocytosis. AP-2 seems to play a role in the recycling of synaptic vesicle membranes from the presynaptic surface. AP-2 recognizes Y-X-X-[FILMV] (Y-X-X-Phi) and [ED]-X-X-X-L-[LI] endocytosis signal motifs within the cytosolic tails of transmembrane cargo molecules. AP-2 may also play a role in maintaining normal post-endocytic trafficking through the ARF6-regulated, non-clathrin pathway. The AP-2 alpha subunit binds polyphosphoinositide-containing lipids, positioning AP-2 on the membrane. During long-term potentiation in hippocampal neurons, AP-2 is responsible for the endocytosis of ADAM10. The AP-2 alpha subunit acts via its C-terminal appendage domain as a scaffolding platform for endocytic accessory proteins. The AP-2 alpha and AP-2 sigma subunits are thought to contribute to the recognition of the [ED]-X-X-X-L-[LI] motif. The sequence is that of AP-2 complex subunit alpha-1 (Ap2a1) from Mus musculus (Mouse).